The chain runs to 431 residues: Protein farnesyltransferase subunit beta (431 aa).

PFTB repeat units follow at residues 130-171, 182-224, 231-273, 280-322, and 332-375; these read KRKI…SLCD, RKGI…TLLN, TEGV…AILR, VEKL…AILE, and KHAL…AVAE. Residues 258-261 and 301-304 each bind (2E,6E)-farnesyl diphosphate; these read HGGY and RSNK. D307 and C309 together coordinate Zn(2+). 310–313 lines the (2E,6E)-farnesyl diphosphate pocket; the sequence is YSFW. H363 contributes to the Zn(2+) binding site.

It belongs to the protein prenyltransferase subunit beta family. In terms of assembly, heterodimer of an alpha (RAM2) and a beta (RAM1) subunit. It depends on Zn(2+) as a cofactor.

It is found in the cytoplasm. The enzyme catalyses L-cysteinyl-[protein] + (2E,6E)-farnesyl diphosphate = S-(2E,6E)-farnesyl-L-cysteinyl-[protein] + diphosphate. Its function is as follows. Catalyzes the transfer of a farnesyl moiety from farnesyl diphosphate to a cysteine at the fourth position from the C-terminus of several proteins having the C-terminal sequence Cys-aliphatic-aliphatic-X where X is Ser, Ala, Met, Cys, or Gln. Required for the membrane localization of proteins such as a-factor, Ras proteins and other membrane proteins containing the C-terminal CAAX motif. The beta subunit is responsible for isoprenoid and peptide-binding. The protein is Protein farnesyltransferase subunit beta of Saccharomyces cerevisiae (strain ATCC 204508 / S288c) (Baker's yeast).